The chain runs to 309 residues: Ornithine carbamoyltransferase (309 aa).

Residues 56–59 (STRT), Gln-83, Arg-107, and 134–137 (HPCQ) each bind carbamoyl phosphate. Residues Asn-165, Asp-223, and 227–228 (SM) contribute to the L-ornithine site. Carbamoyl phosphate contacts are provided by residues 263 to 264 (CL) and Arg-291.

Belongs to the aspartate/ornithine carbamoyltransferase superfamily. OTCase family.

The protein localises to the cytoplasm. It carries out the reaction carbamoyl phosphate + L-ornithine = L-citrulline + phosphate + H(+). It functions in the pathway amino-acid biosynthesis; L-arginine biosynthesis; L-arginine from L-ornithine and carbamoyl phosphate: step 1/3. Reversibly catalyzes the transfer of the carbamoyl group from carbamoyl phosphate (CP) to the N(epsilon) atom of ornithine (ORN) to produce L-citrulline. The polypeptide is Ornithine carbamoyltransferase (Burkholderia cenocepacia (strain HI2424)).